The following is a 453-amino-acid chain: Allantoinase (453 aa).

Zn(2+) contacts are provided by His-59, His-61, Lys-146, His-186, His-242, and Asp-315. Lys-146 is modified (N6-carboxylysine).

This sequence belongs to the metallo-dependent hydrolases superfamily. Allantoinase family. Homotetramer. The cofactor is Zn(2+). Carboxylation allows a single lysine to coordinate two zinc ions.

The catalysed reaction is (S)-allantoin + H2O = allantoate + H(+). The protein operates within nitrogen metabolism; (S)-allantoin degradation; allantoate from (S)-allantoin: step 1/1. In terms of biological role, catalyzes the conversion of allantoin (5-ureidohydantoin) to allantoic acid by hydrolytic cleavage of the five-member hydantoin ring. The chain is Allantoinase from Escherichia coli O139:H28 (strain E24377A / ETEC).